The primary structure comprises 1303 residues: Endoplasmic reticulum transmembrane helix translocase spfA (1303 aa).

2 helical membrane passes run 25-45 (LHAYVWPFLIIWPAFFAVYLS) and 57-77 (EWTFVWSGSIITAQSLLWLMT). The segment at 158-191 (KPPVKVFQQAQGLTSKEEIDRIQHHYGDNTFDIP) is A-domain; part 1. 2 helical membrane-spanning segments follow: residues 201–221 (EHAVAPFFVFQVFCVGLWMLD) and 223–243 (YWYYSLFTLFMLVVFESTVVW). Residues 256 to 408 (NIKPYDVWVY…LVRTMIYSTE (153 aa)) form an A-domain; part 2 region. Residue Asn-287 is glycosylated (N-linked (GlcNAc...) asparagine). A helical transmembrane segment spans residues 415–435 (VEALLFILFLLIFAIAAAWYV). Asn-474 carries N-linked (GlcNAc...) asparagine glycosylation. A P-domain; part 1 region spans residues 484–513 (AIFCTEPFRIPFAGRVDVACFDKTGTLTGE). The active-site 4-aspartylphosphate intermediate is the Asp-505. 2 residues coordinate Mg(2+): Asp-505 and Thr-507. An ATP-binding site is contributed by 505 to 507 (DKT). The interval 515–721 (LVVDGIAGLT…FAGFLVLQCP (207 aa)) is N-domain. Asn-589 carries N-linked (GlcNAc...) asparagine glycosylation. ATP contacts are provided by Phe-616 and Arg-678. Residues 724–883 (EDAIKAVRML…HVGVALLNGS (160 aa)) are P-domain; part 2. N-linked (GlcNAc...) asparagine glycosylation is present at Asn-734. ATP is bound by residues Asp-746 and 862-866 (DGTND). Asp-862 lines the Mg(2+) pocket. The arm-like stretch occupies residues 884-1019 (PEDLAKIAEH…ELDDSEPPTI (136 aa)). The N-linked (GlcNAc...) asparagine glycan is linked to Asn-958. Residues 1020–1035 (KLGDASVAAPFTSKLA) are P-domain; part 3. 5 consecutive transmembrane segments (helical) span residues 1060 to 1080 (ILALNCLISAYSLSVIYLDGI), 1082 to 1102 (FGDGQVTISGMLMSVCFLSIS), 1122 to 1142 (VYIIGSVLGQFAIHIATLIYL), 1201 to 1221 (AMYWGLVAASGVAFSCATEFI), and 1239 to 1259 (VTLTVLMIIDYAGCWIIENVL). The interval 1277–1303 (DQLQREMERKKQEELETQAEKERQRKV) is disordered.

It belongs to the cation transport ATPase (P-type) (TC 3.A.3) family. Type V subfamily. The cofactor is Mg(2+).

It is found in the endoplasmic reticulum membrane. It carries out the reaction [protein]-with a C-terminal TM segment(out) + ATP + H2O = [protein]-with a C-terminal TM segment(in) + ADP + phosphate + H(+). With respect to regulation, the ATPase activity is stimulated by phosphatidylinositol 4-phosphate (PI4P). Endoplasmic reticulum (ER) translocase required to remove mitochondrial transmembrane proteins mistargeted to the endoplasmic reticulum. Acts as a dislocase that mediates the ATP-dependent extraction of mislocalized mitochondrial transmembrane proteins from the endoplasmic reticulum membrane. Works in concert with the ER Ca(2+) pump srcA to support ER homeostasis. With srcA, also supports redox homeostasis and virulence. In Aspergillus fumigatus (strain ATCC MYA-4609 / CBS 101355 / FGSC A1100 / Af293) (Neosartorya fumigata), this protein is Endoplasmic reticulum transmembrane helix translocase spfA.